A 427-amino-acid chain; its full sequence is Glucose-1-phosphate adenylyltransferase (427 aa).

Alpha-D-glucose 1-phosphate-binding positions include Y121, G186, 201 to 202 (EK), and S219.

This sequence belongs to the bacterial/plant glucose-1-phosphate adenylyltransferase family. As to quaternary structure, homotetramer.

It catalyses the reaction alpha-D-glucose 1-phosphate + ATP + H(+) = ADP-alpha-D-glucose + diphosphate. The protein operates within glycan biosynthesis; glycogen biosynthesis. In terms of biological role, involved in the biosynthesis of ADP-glucose, a building block required for the elongation reactions to produce glycogen. Catalyzes the reaction between ATP and alpha-D-glucose 1-phosphate (G1P) to produce pyrophosphate and ADP-Glc. This Corynebacterium diphtheriae (strain ATCC 700971 / NCTC 13129 / Biotype gravis) protein is Glucose-1-phosphate adenylyltransferase.